The chain runs to 231 residues: Uracil-DNA glycosylase (231 aa).

Asp74 (proton acceptor) is an active-site residue.

Belongs to the uracil-DNA glycosylase (UDG) superfamily. UNG family.

The protein resides in the cytoplasm. It carries out the reaction Hydrolyzes single-stranded DNA or mismatched double-stranded DNA and polynucleotides, releasing free uracil.. Functionally, excises uracil residues from the DNA which can arise as a result of misincorporation of dUMP residues by DNA polymerase or due to deamination of cytosine. This is Uracil-DNA glycosylase from Campylobacter jejuni subsp. jejuni serotype O:23/36 (strain 81-176).